The sequence spans 428 residues: Isocitrate dehydrogenase [NADP], mitochondrial (428 aa).

Residues 1-16 constitute a mitochondrion transit peptide; it reads MSMLSRRLFSTSRLAA. NADP(+) is bound by residues 91–93 and Arg-98; that span reads TIT. Residue Thr-93 participates in substrate binding. Substrate-binding positions include 110–116, Arg-125, and Arg-148; that span reads SPNGTIR. Mn(2+) is bound at residue Asp-269. Lys-277 provides a ligand contact to NADP(+). Asp-292 is a Mn(2+) binding site. Residues 327–332 and Asn-345 contribute to the NADP(+) site; that span reads GTVTRH.

Belongs to the isocitrate and isopropylmalate dehydrogenases family. In terms of assembly, homodimer. The cofactor is Mg(2+). It depends on Mn(2+) as a cofactor.

It is found in the mitochondrion. It catalyses the reaction D-threo-isocitrate + NADP(+) = 2-oxoglutarate + CO2 + NADPH. The enzyme is subject to end product inhibition by NADPH and 2-oxoglutarate. Functionally, mitochondrial IDP1 may regulate flux through the tricarboxylic acid cycle and respiration. Its probably critical function is the production of NADPH. The sequence is that of Isocitrate dehydrogenase [NADP], mitochondrial (IDP1) from Saccharomyces cerevisiae (strain ATCC 204508 / S288c) (Baker's yeast).